The sequence spans 378 residues: Dihydroorotate dehydrogenase (quinone) (378 aa).

Residues 77 to 81 (AGFDK) and T101 contribute to the FMN site. K81 lines the substrate pocket. 126-130 (NRMGF) contacts substrate. FMN contacts are provided by N158 and N191. Residue N191 participates in substrate binding. S194 functions as the Nucleophile in the catalytic mechanism. Residue N196 coordinates substrate. The FMN site is built by K229 and T257. 258 to 259 (NT) contributes to the substrate binding site. Residues G287, G316, and 337–338 (YT) each bind FMN.

Belongs to the dihydroorotate dehydrogenase family. Type 2 subfamily. As to quaternary structure, monomer. It depends on FMN as a cofactor.

The protein resides in the cell membrane. It catalyses the reaction (S)-dihydroorotate + a quinone = orotate + a quinol. Its pathway is pyrimidine metabolism; UMP biosynthesis via de novo pathway; orotate from (S)-dihydroorotate (quinone route): step 1/1. In terms of biological role, catalyzes the conversion of dihydroorotate to orotate with quinone as electron acceptor. This is Dihydroorotate dehydrogenase (quinone) from Synechococcus elongatus (strain ATCC 33912 / PCC 7942 / FACHB-805) (Anacystis nidulans R2).